The chain runs to 148 residues: Large ribosomal subunit protein uL22c (148 aa).

This sequence belongs to the universal ribosomal protein uL22 family. In terms of assembly, part of the 50S ribosomal subunit.

The protein localises to the plastid. Its subcellular location is the chloroplast. Its function is as follows. This protein binds specifically to 23S rRNA. Functionally, the globular domain of the protein is located near the polypeptide exit tunnel on the outside of the subunit, while an extended beta-hairpin is found that lines the wall of the exit tunnel in the center of the 70S ribosome. This Zea mays (Maize) protein is Large ribosomal subunit protein uL22c (rpl22).